The sequence spans 609 residues: Indole-3-acetic acid-amido synthetase GH3.17 (609 aa).

It belongs to the IAA-amido conjugating enzyme family.

Functionally, catalyzes the synthesis of indole-3-acetic acid (IAA)-amino acid conjugates, providing a mechanism for the plant to cope with the presence of excess auxin. Strongly reactive with Glu, Gln, Trp, Asp, Ala, Leu, Phe, Gly, Tyr, Met, Ile and Val. Appears to favor Glu over Asp while the other GH3 favor Asp over Glu. Little or no product formation with His, Ser, Thr, Arg, Lys, or Cys. Also active on pyruvic and butyric acid analogs of IAA, PAA and the synthetic auxin naphthaleneacetic acid (NAA). The two chlorinated synthetic auxin herbicides 2,4-D and 3,6-dichloro-o-anisic acid (dicamba) cannot be used as substrates. The chain is Indole-3-acetic acid-amido synthetase GH3.17 (GH3.17) from Arabidopsis thaliana (Mouse-ear cress).